A 504-amino-acid chain; its full sequence is Maturase K (504 aa).

This sequence belongs to the intron maturase 2 family. MatK subfamily.

The protein resides in the plastid. Its subcellular location is the chloroplast. In terms of biological role, usually encoded in the trnK tRNA gene intron. Probably assists in splicing its own and other chloroplast group II introns. The chain is Maturase K from Arabidopsis lyrata (Lyre-leaved rock-cress).